The sequence spans 156 residues: Endoribonuclease YbeY (156 aa).

3 residues coordinate Zn(2+): His122, His126, and His132.

It belongs to the endoribonuclease YbeY family. Requires Zn(2+) as cofactor.

It localises to the cytoplasm. In terms of biological role, single strand-specific metallo-endoribonuclease involved in late-stage 70S ribosome quality control and in maturation of the 3' terminus of the 16S rRNA. This Bacillus cereus (strain B4264) protein is Endoribonuclease YbeY.